The chain runs to 73 residues: Large ribosomal subunit protein bL31 (73 aa).

It belongs to the bacterial ribosomal protein bL31 family. Type A subfamily. In terms of assembly, part of the 50S ribosomal subunit.

In terms of biological role, binds the 23S rRNA. The chain is Large ribosomal subunit protein bL31 from Bartonella bacilliformis (strain ATCC 35685 / KC583 / Herrer 020/F12,63).